A 247-amino-acid chain; its full sequence is Coproheme decarboxylase (247 aa).

Fe-coproporphyrin III-binding positions include R129, 143–147 (YPMDK), H170, Q183, and S221. Y143 is an active-site residue.

The protein belongs to the ChdC family. Type 1 subfamily. Requires Fe-coproporphyrin III as cofactor.

It catalyses the reaction Fe-coproporphyrin III + 2 H2O2 + 2 H(+) = heme b + 2 CO2 + 4 H2O. The enzyme catalyses Fe-coproporphyrin III + H2O2 + H(+) = harderoheme III + CO2 + 2 H2O. The catalysed reaction is harderoheme III + H2O2 + H(+) = heme b + CO2 + 2 H2O. It functions in the pathway porphyrin-containing compound metabolism; protoheme biosynthesis. In terms of biological role, involved in coproporphyrin-dependent heme b biosynthesis. Catalyzes the decarboxylation of Fe-coproporphyrin III (coproheme) to heme b (protoheme IX), the last step of the pathway. The reaction occurs in a stepwise manner with a three-propionate intermediate. The sequence is that of Coproheme decarboxylase from Bacillus mycoides (strain KBAB4) (Bacillus weihenstephanensis).